We begin with the raw amino-acid sequence, 299 residues long: Ethylmalonyl-CoA decarboxylase (299 aa).

K209 carries the post-translational modification N6-acetyllysine; alternate. K209 is modified (N6-succinyllysine; alternate). An N6-succinyllysine modification is found at K293.

Belongs to the enoyl-CoA hydratase/isomerase family.

The protein localises to the cytoplasm. It is found in the cytosol. It carries out the reaction (2S)-ethylmalonyl-CoA + H(+) = butanoyl-CoA + CO2. It catalyses the reaction (S)-methylmalonyl-CoA + H(+) = propanoyl-CoA + CO2. The catalysed reaction is (2R)-ethylmalonyl-CoA + H(+) = butanoyl-CoA + CO2. Its function is as follows. Decarboxylates ethylmalonyl-CoA, a potentially toxic metabolite, to form butyryl-CoA, suggesting it might be involved in metabolite proofreading. Acts preferentially on (S)-ethylmalonyl-CoA but also has some activity on the (R)-isomer. Also has methylmalonyl-CoA decarboxylase activity at lower level. This Rattus norvegicus (Rat) protein is Ethylmalonyl-CoA decarboxylase (Echdc1).